The sequence spans 405 residues: 4-hydroxy-3-methylbut-2-en-1-yl diphosphate synthase (flavodoxin) (405 aa).

The [4Fe-4S] cluster site is built by C297, C300, C343, and E350.

This sequence belongs to the IspG family. The cofactor is [4Fe-4S] cluster.

It carries out the reaction (2E)-4-hydroxy-3-methylbut-2-enyl diphosphate + oxidized [flavodoxin] + H2O + 2 H(+) = 2-C-methyl-D-erythritol 2,4-cyclic diphosphate + reduced [flavodoxin]. It functions in the pathway isoprenoid biosynthesis; isopentenyl diphosphate biosynthesis via DXP pathway; isopentenyl diphosphate from 1-deoxy-D-xylulose 5-phosphate: step 5/6. Its function is as follows. Converts 2C-methyl-D-erythritol 2,4-cyclodiphosphate (ME-2,4cPP) into 1-hydroxy-2-methyl-2-(E)-butenyl 4-diphosphate. This Francisella tularensis subsp. mediasiatica (strain FSC147) protein is 4-hydroxy-3-methylbut-2-en-1-yl diphosphate synthase (flavodoxin).